Consider the following 1010-residue polypeptide: Regulator of telomere elongation helicase 1 homolog (1010 aa).

The Helicase ATP-binding domain maps to Asn7–Thr333. An ATP-binding site is contributed by Ser42–Thr49. The [4Fe-4S] cluster site is built by Cys157, Cys175, Cys184, and Cys220. The DEAH box signature appears at Asp263–His266. Positions Thr912–Glu931 are disordered. The span at Pro918–Glu931 shows a compositional bias: basic and acidic residues.

Belongs to the helicase family. RAD3/XPD subfamily.

The protein resides in the nucleus. It catalyses the reaction ATP + H2O = ADP + phosphate + H(+). In terms of biological role, a probable ATP-dependent DNA helicase implicated in DNA repair and the maintenance of genomic stability. Acts as an anti-recombinase to counteract toxic recombination and limit crossover during meiosis. Regulates meiotic recombination and crossover homeostasis by physically dissociating strand invasion events and thereby promotes noncrossover repair by meiotic synthesis dependent strand annealing (SDSA) as well as disassembly of D loop recombination intermediates. In Aedes aegypti (Yellowfever mosquito), this protein is Regulator of telomere elongation helicase 1 homolog.